The sequence spans 99 residues: Large ribosomal subunit protein bL21 (99 aa).

Belongs to the bacterial ribosomal protein bL21 family. As to quaternary structure, part of the 50S ribosomal subunit. Contacts protein L20.

Its function is as follows. This protein binds to 23S rRNA in the presence of protein L20. The polypeptide is Large ribosomal subunit protein bL21 (Deinococcus geothermalis (strain DSM 11300 / CIP 105573 / AG-3a)).